The primary structure comprises 36 residues: Glucagon-1 (36 aa).

It belongs to the glucagon family.

The protein localises to the secreted. Functionally, promotes hydrolysis of glycogen and lipids, and raises the blood sugar level. The sequence is that of Glucagon-1 (gcg1) from Oreochromis niloticus (Nile tilapia).